The primary structure comprises 328 residues: DNA-directed RNA polymerase subunit alpha (328 aa).

The alpha N-terminal domain (alpha-NTD) stretch occupies residues 1–231 (MQTNLLKPKA…EQLAVFAQLE (231 aa)). The interval 248–328 (FDPILLRPVD…NWPPQGLDKR (81 aa)) is alpha C-terminal domain (alpha-CTD).

The protein belongs to the RNA polymerase alpha chain family. As to quaternary structure, homodimer. The RNAP catalytic core consists of 2 alpha, 1 beta, 1 beta' and 1 omega subunit. When a sigma factor is associated with the core the holoenzyme is formed, which can initiate transcription.

It carries out the reaction RNA(n) + a ribonucleoside 5'-triphosphate = RNA(n+1) + diphosphate. In terms of biological role, DNA-dependent RNA polymerase catalyzes the transcription of DNA into RNA using the four ribonucleoside triphosphates as substrates. The chain is DNA-directed RNA polymerase subunit alpha from Leptothrix cholodnii (strain ATCC 51168 / LMG 8142 / SP-6) (Leptothrix discophora (strain SP-6)).